A 356-amino-acid polypeptide reads, in one-letter code: Uroporphyrinogen decarboxylase (356 aa).

Substrate contacts are provided by residues 27–31 (RQAGR), D77, Y154, T209, and H327.

The protein belongs to the uroporphyrinogen decarboxylase family. Homodimer.

The protein resides in the cytoplasm. The enzyme catalyses uroporphyrinogen III + 4 H(+) = coproporphyrinogen III + 4 CO2. Its pathway is porphyrin-containing compound metabolism; protoporphyrin-IX biosynthesis; coproporphyrinogen-III from 5-aminolevulinate: step 4/4. Functionally, catalyzes the decarboxylation of four acetate groups of uroporphyrinogen-III to yield coproporphyrinogen-III. The sequence is that of Uroporphyrinogen decarboxylase from Hamiltonella defensa subsp. Acyrthosiphon pisum (strain 5AT).